The primary structure comprises 57 residues: uncharacterized protein (57 aa).

A helical transmembrane segment spans residues Ala34–Val54.

Its subcellular location is the membrane. This is an uncharacterized protein from Dictyostelium discoideum (Social amoeba).